A 140-amino-acid chain; its full sequence is uncharacterized protein (140 aa).

This is an uncharacterized protein from Saccharomyces cerevisiae (strain ATCC 204508 / S288c) (Baker's yeast).